The primary structure comprises 508 residues: Photosystem II CP47 reaction center protein (508 aa).

Transmembrane regions (helical) follow at residues 21-36 (SVHIMHTALVAGWAGS), 101-115 (IVFSGLCFLAAIWHW), 140-156 (GIHLFLAGLACFGFGAF), 203-218 (IAAGTLGILAGLFHLS), 237-252 (VLSSSIAAVFFAAFVV), and 457-472 (SFALLFFFGHIWHGSR).

The protein belongs to the PsbB/PsbC family. PsbB subfamily. As to quaternary structure, PSII is composed of 1 copy each of membrane proteins PsbA, PsbB, PsbC, PsbD, PsbE, PsbF, PsbH, PsbI, PsbJ, PsbK, PsbL, PsbM, PsbT, PsbX, PsbY, PsbZ, Psb30/Ycf12, at least 3 peripheral proteins of the oxygen-evolving complex and a large number of cofactors. It forms dimeric complexes. Requires Binds multiple chlorophylls. PSII binds additional chlorophylls, carotenoids and specific lipids. as cofactor.

It localises to the plastid. The protein resides in the chloroplast thylakoid membrane. Functionally, one of the components of the core complex of photosystem II (PSII). It binds chlorophyll and helps catalyze the primary light-induced photochemical processes of PSII. PSII is a light-driven water:plastoquinone oxidoreductase, using light energy to abstract electrons from H(2)O, generating O(2) and a proton gradient subsequently used for ATP formation. The protein is Photosystem II CP47 reaction center protein of Helianthus annuus (Common sunflower).